A 511-amino-acid polypeptide reads, in one-letter code: Coatomer subunit delta (511 aa).

Over residues 168 to 177 (QARRDAERQG) the composition is skewed to basic and acidic residues. A disordered region spans residues 168–188 (QARRDAERQGKKAPGFGGFGS). The residue at position 223 (S223) is a Phosphoserine. N6-acetyllysine is present on residues K233 and K241. S244 is modified (phosphoserine). Residues 271-511 (MESVHMKIEE…TFLVDKYEIL (241 aa)) form the MHD domain. K309 and K351 each carry N6-acetyllysine. Position 493 is a phosphoserine (S493).

Belongs to the adaptor complexes medium subunit family. Delta-COP subfamily. In terms of assembly, oligomeric complex that consists of at least the alpha, beta, beta', gamma, delta, epsilon and zeta subunits.

It is found in the cytoplasm. The protein resides in the golgi apparatus membrane. Its subcellular location is the cytoplasmic vesicle. It localises to the COPI-coated vesicle membrane. The coatomer is a cytosolic protein complex that binds to dilysine motifs and reversibly associates with Golgi non-clathrin-coated vesicles, which further mediate biosynthetic protein transport from the ER, via the Golgi up to the trans Golgi network. Coatomer complex is required for budding from Golgi membranes, and is essential for the retrograde Golgi-to-ER transport of dilysine-tagged proteins. In mammals, the coatomer can only be recruited by membranes associated to ADP-ribosylation factors (ARFs), which are small GTP-binding proteins; the complex also influences the Golgi structural integrity, as well as the processing, activity, and endocytic recycling of LDL receptors. This Rattus norvegicus (Rat) protein is Coatomer subunit delta (Arcn1).